Consider the following 339-residue polypeptide: Anthranilate phosphoribosyltransferase (339 aa).

5-phospho-alpha-D-ribose 1-diphosphate contacts are provided by residues G79, 82–83, S87, 89–92, 107–115, and S119; these read GD, NIST, and KHGNRSISS. Position 79 (G79) interacts with anthranilate. Residue S91 coordinates Mg(2+). Position 110 (N110) interacts with anthranilate. R165 lines the anthranilate pocket. Mg(2+)-binding residues include D224 and E225.

It belongs to the anthranilate phosphoribosyltransferase family. Homodimer. It depends on Mg(2+) as a cofactor.

It carries out the reaction N-(5-phospho-beta-D-ribosyl)anthranilate + diphosphate = 5-phospho-alpha-D-ribose 1-diphosphate + anthranilate. It functions in the pathway amino-acid biosynthesis; L-tryptophan biosynthesis; L-tryptophan from chorismate: step 2/5. Catalyzes the transfer of the phosphoribosyl group of 5-phosphorylribose-1-pyrophosphate (PRPP) to anthranilate to yield N-(5'-phosphoribosyl)-anthranilate (PRA). This Listeria monocytogenes serotype 4a (strain HCC23) protein is Anthranilate phosphoribosyltransferase.